A 299-amino-acid polypeptide reads, in one-letter code: ATP phosphoribosyltransferase (299 aa).

Belongs to the ATP phosphoribosyltransferase family. Long subfamily. In terms of assembly, equilibrium between an active dimeric form, an inactive hexameric form and higher aggregates. Interconversion between the various forms is largely reversible and is influenced by the natural substrates and inhibitors of the enzyme. Requires Mg(2+) as cofactor.

The protein localises to the cytoplasm. The enzyme catalyses 1-(5-phospho-beta-D-ribosyl)-ATP + diphosphate = 5-phospho-alpha-D-ribose 1-diphosphate + ATP. It participates in amino-acid biosynthesis; L-histidine biosynthesis; L-histidine from 5-phospho-alpha-D-ribose 1-diphosphate: step 1/9. Its activity is regulated as follows. Feedback inhibited by histidine. In terms of biological role, catalyzes the condensation of ATP and 5-phosphoribose 1-diphosphate to form N'-(5'-phosphoribosyl)-ATP (PR-ATP). Has a crucial role in the pathway because the rate of histidine biosynthesis seems to be controlled primarily by regulation of HisG enzymatic activity. This Shigella dysenteriae serotype 1 (strain Sd197) protein is ATP phosphoribosyltransferase.